The following is a 589-amino-acid chain: MTLVNVGPERFDVWAPDVSSVVLVADGRQYPMQKKETAPGSEGWWTASDAPPNGDVDYGYLLDGNTTPVPEPRSRRLPAGVHNHSRTYNPPPYRWQDSRWRGKELQGTLIYQLHVGTSTPDGTLDAAGEKLSYLVDLGIDFIELLPVNGFNGTHNWGYDGVQWYTVHEGYGGPAAYQRFVDAAHAAGLGVIQDVVYNHLGLRGNYFPKLGPNLKQGDANTLGDSVNLDGAGSDVFREYILDNAALWVGDYHVDGVGFDAVHAVRDERAVHILEDLGALGDAISGETGLPKTLIAESDFNNPRLIYPRDVNGYGLAGQWSDDFHTAVHVSVSGETTGYYSDFESLAVLAKVLKDGFLHDGSYSSFRGRHHGRPINPSLANPAALVVCNQNHDQIGNRATGDRLSQSLSYGQLAVAAVLTLTSPFTPMLFMGEEYGASTPWQFFTSHPEPELGKATAEGRIKEFERMGWDPAVVPDPQDPETFNRSKLDWSEASTGDHARLLELYKSLTALRREHPDLADLGFGQTEVSFDDDAGWLRFRPVSVEVLVNLSDAKVRLDDAAGDLLLATDEGNPLDGGSLALVPWSAAVLKS.

Glycine 256 to histidine 261 contributes to the substrate binding site. The active-site Nucleophile is the aspartate 258. Glutamate 295 functions as the Proton donor in the catalytic mechanism. Substrate contacts are provided by residues aspartate 320 to threonine 324 and histidine 390 to asparagine 395.

The protein belongs to the glycosyl hydrolase 13 family.

Its subcellular location is the cytoplasm. The catalysed reaction is hydrolysis of (1-&gt;4)-alpha-D-glucosidic linkage in 4-alpha-D-[(1-&gt;4)-alpha-D-glucanosyl]n trehalose to yield trehalose and (1-&gt;4)-alpha-D-glucan.. The protein operates within glycan biosynthesis; trehalose biosynthesis. In Brevibacterium helvolum, this protein is Malto-oligosyltrehalose trehalohydrolase (treZ).